The following is a 227-amino-acid chain: Large ribosomal subunit protein uL3 (227 aa).

The protein belongs to the universal ribosomal protein uL3 family. In terms of assembly, part of the 50S ribosomal subunit. Forms a cluster with proteins L14 and L19.

Its function is as follows. One of the primary rRNA binding proteins, it binds directly near the 3'-end of the 23S rRNA, where it nucleates assembly of the 50S subunit. The sequence is that of Large ribosomal subunit protein uL3 from Leuconostoc citreum (strain KM20).